A 135-amino-acid polypeptide reads, in one-letter code: Poly [ADP-ribose] polymerase 1 (135 aa).

The PARP alpha-helical domain occupies 1 to 21; that stretch reads QAKVEMLDNLLDIEVAYSLLK. Positions 30–135 constitute a PARP catalytic domain; that stretch reads DPIDINYEKL…APVTGYMFGK (106 aa). Residues 104–106, Gly-113, and Arg-120 each bind NAD(+); that span reads HGS. Lys-135 is a catalytic residue.

It belongs to the ARTD/PARP family. Homodimer; PARP-type zinc-fingers from separate parp1 molecules form a dimer module that specifically recognizes DNA strand breaks. Poly-ADP-ribosylated on serine, glutamate and aspartate residues by autocatalysis. Auto-ADP-ribosylation on serine takes place following interaction with HPF1. Auto poly-ADP-ribosylation on serine residues promotes its dissociation from chromatin.

Its subcellular location is the chromosome. It localises to the nucleus. The protein resides in the nucleolus. It is found in the cytoplasm. The protein localises to the cytosol. It catalyses the reaction NAD(+) + (ADP-D-ribosyl)n-acceptor = nicotinamide + (ADP-D-ribosyl)n+1-acceptor + H(+).. The catalysed reaction is L-seryl-[protein] + NAD(+) = O-(ADP-D-ribosyl)-L-seryl-[protein] + nicotinamide + H(+). The enzyme catalyses L-aspartyl-[protein] + NAD(+) = 4-O-(ADP-D-ribosyl)-L-aspartyl-[protein] + nicotinamide. It carries out the reaction L-glutamyl-[protein] + NAD(+) = 5-O-(ADP-D-ribosyl)-L-glutamyl-[protein] + nicotinamide. It catalyses the reaction L-tyrosyl-[protein] + NAD(+) = O-(ADP-D-ribosyl)-L-tyrosyl-[protein] + nicotinamide + H(+). The catalysed reaction is L-histidyl-[protein] + NAD(+) = N(tele)-(ADP-D-ribosyl)-L-histidyl-[protein] + nicotinamide + H(+). With respect to regulation, ADP-ribosyltransferase activity is regulated via an allosteric activation mechanism. In absence of activation signal, parp1 is autoinhibited by the PARP alpha-helical domain (also named HD region), which prevents effective NAD(+)-binding. Activity is highly stimulated by signals, such as DNA strand breaks. Binding to damaged DNA unfolds the PARP alpha-helical domain, relieving autoinhibition. Poly-ADP-ribosyltransferase activity is tightly regulated and parp1 is removed from damaged chromatin following initial poly-ADP-ribosylation of chromatin to avoid prolonged residence (trapping) that has cytotoxic consequences. A number of factors or post-translational modifications (auto-poly-ADP-ribosylation) promote parp1 removal from chromatin. In terms of biological role, poly-ADP-ribosyltransferase that mediates poly-ADP-ribosylation of proteins and plays a key role in DNA repair. Mediates glutamate, aspartate, serine, histidine or tyrosine ADP-ribosylation of proteins: the ADP-D-ribosyl group of NAD(+) is transferred to the acceptor carboxyl group of target residues and further ADP-ribosyl groups are transferred to the 2'-position of the terminal adenosine moiety, building up a polymer with an average chain length of 20-30 units. Serine ADP-ribosylation of proteins constitutes the primary form of ADP-ribosylation of proteins in response to DNA damage. Specificity for the different amino acids is conferred by interacting factors, such as hpf1 and nmnat1. Following interaction with hpf1, catalyzes serine ADP-ribosylation of target proteins; hpf1 confers serine specificity by completing the parp1 active site. Also catalyzes tyrosine ADP-ribosylation of target proteins following interaction with hpf1. Following interaction with nmnat1, catalyzes glutamate and aspartate ADP-ribosylation of target proteins; nmnat1 confers glutamate and aspartate specificity. Parp1 initiates the repair of DNA breaks: recognizes and binds DNA breaks within chromatin and recruits hpf1, licensing serine ADP-ribosylation of target proteins, such as histones (H2BS6ADPr and H3S10ADPr), thereby promoting decompaction of chromatin and the recruitment of repair factors leading to the reparation of DNA strand breaks. In addition to base excision repair (BER) pathway, also involved in double-strand breaks (DSBs) repair. Mediates the poly-ADP-ribosylation of a number of proteins. In addition to proteins, also able to ADP-ribosylate DNA: catalyzes ADP-ribosylation of DNA strand break termini containing terminal phosphates and a 2'-OH group in single- and double-stranded DNA, respectively. Parp1-mediated DNA repair in neurons plays a role in sleep: senses DNA damage in neurons and promotes sleep, facilitating efficient DNA repair. In addition to DNA repair, also involved in other processes, such as transcription regulation, programmed cell death, membrane repair, adipogenesis and innate immunity. Acts as a repressor of transcription: binds to nucleosomes and modulates chromatin structure in a manner similar to histone H1, thereby altering RNA polymerase II. Acts both as a positive and negative regulator of transcription elongation, depending on the context. Poly-ADP-ribose chains generated by parp1 also play a role in poly-ADP-ribose-dependent cell death, a process named parthanatos. Also acts as a negative regulator of the cGAS-STING pathway by mediating poly-ADP-ribosylation and inactivation of cgas. Acts as a negative regulator of adipogenesis by catalyzing poly ADP-ribosylation of histone H2B on 'Glu-35' (H2BE35ADPr). In Oncorhynchus masou (Cherry salmon), this protein is Poly [ADP-ribose] polymerase 1 (parp1).